We begin with the raw amino-acid sequence, 500 residues long: Maintenance of mitochondrial morphology protein 1 (500 aa).

At 1–42 (MATQVATPLSPSYTSELIIVCHHVLQHSPTPLTPHSLSFTQG) the chain is on the lumenal side. A helical transmembrane segment spans residues 43-63 (FLLGQLSIALLIFFFIKFFIF). Residues 64–500 (GEPPSADDRS…PGALAPGTFR (437 aa)) lie on the Cytoplasmic side of the membrane. One can recognise an SMP-LTD domain in the interval 141 to 375 (QPESLDWFNV…EPRFQQIVLP (235 aa)). Low complexity-rich tracts occupy residues 283–294 (SSSPPSTSTTTP) and 302–316 (NSTT…HRPT). Disordered stretches follow at residues 283-316 (SSSP…HRPT) and 406-500 (EEEE…GTFR). The span at 406–415 (EEEEEEEEDG) shows a compositional bias: acidic residues. The segment covering 438-471 (EGAKLREAEIRAGVRKQERPGMSRAQTSREEGVR) has biased composition (basic and acidic residues).

Belongs to the MMM1 family. In terms of assembly, homodimer. Component of the ER-mitochondria encounter structure (ERMES) or MDM complex, composed of MMM1, MDM10, MDM12 and MDM34. An MMM1 homodimer associates with one molecule of MDM12 on each side in a pairwise head-to-tail manner, and the SMP-LTD domains of MMM1 and MDM12 generate a continuous hydrophobic tunnel for phospholipid trafficking.

Its subcellular location is the endoplasmic reticulum membrane. Component of the ERMES/MDM complex, which serves as a molecular tether to connect the endoplasmic reticulum (ER) and mitochondria. Components of this complex are involved in the control of mitochondrial shape and protein biogenesis, and function in nonvesicular lipid trafficking between the ER and mitochondria. The MDM12-MMM1 subcomplex functions in the major beta-barrel assembly pathway that is responsible for biogenesis of all outer membrane beta-barrel proteins, and acts in a late step after the SAM complex. The MDM10-MDM12-MMM1 subcomplex further acts in the TOM40-specific pathway after the action of the MDM12-MMM1 complex. Essential for establishing and maintaining the structure of mitochondria and maintenance of mtDNA nucleoids. The sequence is that of Maintenance of mitochondrial morphology protein 1 from Phaeosphaeria nodorum (strain SN15 / ATCC MYA-4574 / FGSC 10173) (Glume blotch fungus).